A 99-amino-acid polypeptide reads, in one-letter code: Protein AC150 (99 aa).

In terms of domain architecture, Chitin-binding type-2 spans 38–96 (GFSCYNKPIGVNFPHPTRCDAFYMCVGLNQKLELICPEGFEFDPDVKNCVPISDYGCTA). Cys73 and Cys86 are disulfide-bonded.

Its subcellular location is the host nucleus. It is found in the virion. Plays a role in primary oral infection of the host. The chain is Protein AC150 from Autographa californica nuclear polyhedrosis virus (AcMNPV).